A 427-amino-acid polypeptide reads, in one-letter code: Histidine--tRNA ligase (427 aa).

This sequence belongs to the class-II aminoacyl-tRNA synthetase family. In terms of assembly, homodimer.

It is found in the cytoplasm. The enzyme catalyses tRNA(His) + L-histidine + ATP = L-histidyl-tRNA(His) + AMP + diphosphate + H(+). The protein is Histidine--tRNA ligase of Lacticaseibacillus casei (strain BL23) (Lactobacillus casei).